The sequence spans 119 residues: Holo-[acyl-carrier-protein] synthase (119 aa).

Positions 5 and 51 each coordinate Mg(2+).

The protein belongs to the P-Pant transferase superfamily. AcpS family. It depends on Mg(2+) as a cofactor.

It localises to the cytoplasm. The catalysed reaction is apo-[ACP] + CoA = holo-[ACP] + adenosine 3',5'-bisphosphate + H(+). Its function is as follows. Transfers the 4'-phosphopantetheine moiety from coenzyme A to a Ser of acyl-carrier-protein. The chain is Holo-[acyl-carrier-protein] synthase from Helicobacter pylori (strain G27).